The chain runs to 192 residues: Protein GrpE (192 aa).

The protein belongs to the GrpE family. In terms of assembly, homodimer.

The protein resides in the cytoplasm. Functionally, participates actively in the response to hyperosmotic and heat shock by preventing the aggregation of stress-denatured proteins, in association with DnaK and GrpE. It is the nucleotide exchange factor for DnaK and may function as a thermosensor. Unfolded proteins bind initially to DnaJ; upon interaction with the DnaJ-bound protein, DnaK hydrolyzes its bound ATP, resulting in the formation of a stable complex. GrpE releases ADP from DnaK; ATP binding to DnaK triggers the release of the substrate protein, thus completing the reaction cycle. Several rounds of ATP-dependent interactions between DnaJ, DnaK and GrpE are required for fully efficient folding. The polypeptide is Protein GrpE (Neisseria gonorrhoeae (strain NCCP11945)).